Consider the following 434-residue polypeptide: Histidinol dehydrogenase (434 aa).

Residues Ser242, Gln264, and His267 each coordinate substrate. Zn(2+) contacts are provided by Gln264 and His267. Catalysis depends on proton acceptor residues Glu332 and His333. Substrate is bound by residues His333, Asp366, Glu420, and His425. Asp366 provides a ligand contact to Zn(2+). His425 serves as a coordination point for Zn(2+).

It belongs to the histidinol dehydrogenase family. Requires Zn(2+) as cofactor.

The catalysed reaction is L-histidinol + 2 NAD(+) + H2O = L-histidine + 2 NADH + 3 H(+). It functions in the pathway amino-acid biosynthesis; L-histidine biosynthesis; L-histidine from 5-phospho-alpha-D-ribose 1-diphosphate: step 9/9. In terms of biological role, catalyzes the sequential NAD-dependent oxidations of L-histidinol to L-histidinaldehyde and then to L-histidine. This Oleidesulfovibrio alaskensis (strain ATCC BAA-1058 / DSM 17464 / G20) (Desulfovibrio alaskensis) protein is Histidinol dehydrogenase.